Consider the following 472-residue polypeptide: Aspartyl/glutamyl-tRNA(Asn/Gln) amidotransferase subunit B (472 aa).

Belongs to the GatB/GatE family. GatB subfamily. Heterotrimer of A, B and C subunits.

The catalysed reaction is L-glutamyl-tRNA(Gln) + L-glutamine + ATP + H2O = L-glutaminyl-tRNA(Gln) + L-glutamate + ADP + phosphate + H(+). It carries out the reaction L-aspartyl-tRNA(Asn) + L-glutamine + ATP + H2O = L-asparaginyl-tRNA(Asn) + L-glutamate + ADP + phosphate + 2 H(+). Functionally, allows the formation of correctly charged Asn-tRNA(Asn) or Gln-tRNA(Gln) through the transamidation of misacylated Asp-tRNA(Asn) or Glu-tRNA(Gln) in organisms which lack either or both of asparaginyl-tRNA or glutaminyl-tRNA synthetases. The reaction takes place in the presence of glutamine and ATP through an activated phospho-Asp-tRNA(Asn) or phospho-Glu-tRNA(Gln). The polypeptide is Aspartyl/glutamyl-tRNA(Asn/Gln) amidotransferase subunit B (Sulfolobus acidocaldarius (strain ATCC 33909 / DSM 639 / JCM 8929 / NBRC 15157 / NCIMB 11770)).